The primary structure comprises 298 residues: uncharacterized protein (298 aa).

Transmembrane regions (helical) follow at residues 5–23 (ILVS…YFST), 33–52 (IFGY…VTLF), 72–91 (ALSY…LFLW), 101–120 (VSFG…RVFF), 127–145 (FKFI…NIVL), 149–166 (LSWE…YFSI), 175–194 (LASF…YFAL), 207–229 (FIWG…YVIA), 238–260 (LGLL…GEQI), and 265–284 (YPLF…DGVY). Positions 13-144 (FLFGYMYYFS…ATLGVISNIV (132 aa)) constitute an EamA domain.

This sequence belongs to the EamA transporter family.

It is found in the cell membrane. This is an uncharacterized protein from Haemophilus influenzae (strain ATCC 51907 / DSM 11121 / KW20 / Rd).